A 521-amino-acid chain; its full sequence is Histone deacetylase HDAC1 (521 aa).

Positions 7-319 (KRVCYYYDSD…WTYETSVALA (313 aa)) are histone deacetylase. His139 is an active-site residue. Residues 376–521 (GVQIQAIPED…GAKGAKENNI (146 aa)) are disordered. A compositionally biased stretch (acidic residues) spans 386-395 (AINDESDDED). Phosphoserine is present on Ser391. A compositionally biased stretch (basic and acidic residues) spans 396–414 (KVDKDDRLPQSDKDKRIVP). Phosphoserine occurs at positions 419, 421, and 455. Thr457 is modified (phosphothreonine). The segment covering 459–470 (SEIKDEKEKGDG) has biased composition (basic and acidic residues). A compositionally biased stretch (low complexity) spans 476-502 (STASNTNSNNNSNNKSDNDAGATANAG). The segment covering 503-513 (SGSGSGSGAGA) has biased composition (gly residues).

It belongs to the histone deacetylase family. HD type 1 subfamily. Component of a form of the Esc/E(z) complex present specifically during early embryogenesis which is composed of Caf1-55, esc, E(z), Su(z)12, Pcl and HDAC1. The Esc/E(z) complex may also associate with Pcl and HDAC1 during early embryogenesis. This complex is distinct from the PRC1 complex, which contains many other PcG proteins like Pc, Ph, Psc, Su(z)2. The 2 complexes however cooperate and interact together during the first 3 hours of development to establish PcG silencing. Interacts with the histone methyltransferase Su(var)3-9. Component of a complex that contains at least HDAC1, CoRest and Su(var)3-3/Hdm. Component of the DREAM complex at least composed of Myb, Caf1-55, mip40, mip120, mip130, E2f2, Dp, Rbf, Rbf2, lin-52, HDAC1 and l(3)mbt. Interacts with the chromatin-remodeler Mi-2. Interacts with Rrp6.

Its subcellular location is the nucleus. It carries out the reaction N(6)-acetyl-L-lysyl-[histone] + H2O = L-lysyl-[histone] + acetate. Its function is as follows. Catalyzes the deacetylation of lysine residues on the N-terminal part of the core histones (H2A, H2B, H3 and H4). Histone deacetylation may constitute a tag for epigenetic repression and plays an important role in transcriptional regulation, cell cycle progression and developmental events. For instance, deacetylation of histone H3 may be a prerequisite for the subsequent recruitment of the histone methyltransferase Su(var)3-9 to histones. Involved in position-effect variegation (PEV). In the larval brain, part of a regulatory network including the transcriptional repressors klu, dpn and E(spl)mgamma-HLH which is required for type II neuroblast self-renewal and for maintaining erm in an inactive state in intermediate neural progenitors (INP). The polypeptide is Histone deacetylase HDAC1 (Drosophila melanogaster (Fruit fly)).